Here is a 759-residue protein sequence, read N- to C-terminus: MISSTSVYGLKMQWTPEHAQWPEQHFDITSTTRSPAHKVEAYRGHLQRTYQYAWANDDISALTASNLLKKYAEKYSGILEGPVDRPVLSNYSDTPSGLVNGRKNDSEPWQPSLNSEAVYPMNCVPDVITASKAGVSSALPPVDVSASIGSSPGVASNLTEPSYSSSTCGSHTVPSLHAGLPSQEYAPGYNGSYLHSTYSSQATPALPSPHPSPLHSSGLLQPPPPPPPPPALVPGYNGTSNLSSYSYPSASYPPQTAVGSGYSPGGAPPPPSAYLPSGIPAPTPLPPTTVPGYTYQGHGLTPIAPSALTNNSASSLKRKAFYMAGQGDMDSSYGNYSYGQQRSTQSPMYRMPDNSISNSNRGNGFDRNAETSSLAFKPTKQLMPSEQQRKFSSQSSRALTPPSYSTAKNSLGSRSSESFGKYTSPVMSEHGDDHRQLLAHPIQGPGLRAATSSNHSVDEQLKNTDTHLIDLVTNEIITQGPPVDWSDIAGLDLVKAVIKEEVLWPVLRSDAFSGLTALPRSILLFGPRGTGKTLLGRCIASQLGATFFKIAGSGLVAKWIGEAEKIIHASFLVARCRQPSVIFVSDIDMLLSSQVSEEHSPVSRMRTEFLMQLDTVLTSAEDQIVVICATSKPEEIDESLRRYFMKRLLIPLPDSTARHQIIVQLLTQHNYCLNDKEFALLVQRTEGFSGLDVAHLCQEAAVGPLHAMPATDLSAIMPSQLRPVTYQDFENAFCKIQPSISQKELDMYVEWNKMFGCSQ.

4 disordered regions span residues 89–111 (SNYS…PWQP), 200–237 (SQAT…PGYN), 258–293 (VGSG…VPGY), and 337–429 (SYGQ…VMSE). 2 stretches are compositionally biased toward pro residues: residues 221–232 (QPPPPPPPPPAL) and 266–289 (GAPP…PPTT). 2 stretches are compositionally biased toward polar residues: residues 337-347 (SYGQQRSTQSP) and 382-418 (LMPS…SSES). A Phosphothreonine modification is found at threonine 400. Residues alanine 489 and 529–534 (GTGKTL) contribute to the ATP site.

The protein belongs to the AAA ATPase family. As to quaternary structure, interacts with AKAP8 (via C-terminus). In terms of tissue distribution, widely expressed.

Its subcellular location is the nucleus matrix. It is found in the cytoplasm. The protein localises to the cytoskeleton. The protein resides in the microtubule organizing center. It localises to the centrosome. In terms of biological role, ATP-dependent microtubule severing protein. Severs microtubules along their length and depolymerizes their ends, primarily the minus-end, suppressing microtubule growth from and attachment to centrosomes. Microtubule severing may promote rapid reorganization of cellular microtubule arrays and the release of microtubules from the centrosome following nucleation. Microtubule release from the mitotic spindle poles may allow depolymerization of the microtubule end proximal to the spindle pole, leading to poleward microtubule flux and poleward motion of chromosome. The chain is Fidgetin (Fign) from Mus musculus (Mouse).